Here is a 205-residue protein sequence, read N- to C-terminus: Ribonuclease HII (205 aa).

One can recognise an RNase H type-2 domain in the interval 1 to 203 (MKAGIDEAGK…VSNLRQKTLD (203 aa)). The a divalent metal cation site is built by D6 and E7. Residue R46 coordinates substrate. D101 provides a ligand contact to a divalent metal cation. Residues K143, R146, and Y164 each contribute to the substrate site.

This sequence belongs to the RNase HII family. It depends on Mn(2+) as a cofactor. Mg(2+) is required as a cofactor.

The protein resides in the cytoplasm. The catalysed reaction is Endonucleolytic cleavage to 5'-phosphomonoester.. Endonuclease that specifically degrades the RNA of RNA-DNA hybrids. The polypeptide is Ribonuclease HII (rnhB) (Archaeoglobus fulgidus (strain ATCC 49558 / DSM 4304 / JCM 9628 / NBRC 100126 / VC-16)).